Consider the following 479-residue polypeptide: Anaerobic nitric oxide reductase flavorubredoxin (479 aa).

A zinc metallo-hydrolase region spans residues 30 to 210; that stretch reads LRGSSYNSYL…PFSRLVTPKI (181 aa). Residues H79, E81, D83, H147, D166, and H227 each coordinate Fe cation. One can recognise a Flavodoxin-like domain in the interval 254 to 393; it reads ITIFYDTMSN…LCREHGREIA (140 aa). Residues 260–264 and 342–369 each bind FMN; these read TMSNN and AFGSHGWSGGAVDRLSTRLQDAGFEMSL. The Rubredoxin-like domain maps to 423-479; it reads GPRMQCSVCQWIYDPAKGEPMQDVAPGTPWSEVPDNFLCPECSLGKDVFEELASEAK. Fe cation is bound by residues C428, C431, C461, and C464.

This sequence in the N-terminal section; belongs to the zinc metallo-hydrolase group 3 family. In terms of assembly, homotetramer. The cofactor is Fe cation. FMN is required as a cofactor.

It is found in the cytoplasm. It functions in the pathway nitrogen metabolism; nitric oxide reduction. Anaerobic nitric oxide reductase; uses NADH to detoxify nitric oxide (NO), protecting several 4Fe-4S NO-sensitive enzymes. Has at least 2 reductase partners, only one of which (NorW, flavorubredoxin reductase) has been identified. NO probably binds to the di-iron center; electrons enter from the reductase at rubredoxin and are transferred sequentially to the FMN center and the di-iron center. Also able to function as an aerobic oxygen reductase. The sequence is that of Anaerobic nitric oxide reductase flavorubredoxin (norV) from Escherichia coli (strain K12 / DH10B).